We begin with the raw amino-acid sequence, 59 residues long: Gonadotropin-releasing hormone receptor (59 aa).

Residues 1–2 (VA) lie on the Cytoplasmic side of the membrane. The helical transmembrane segment at 3–23 (FATSFTVCWTPYYVLGIWYWF) threads the bilayer. The Extracellular segment spans residues 24–37 (DPEMLNRVSDPVNH). A helical membrane pass occupies residues 38–58 (FFFLFAFLNPCFDPLIYGYFS). A topological domain (cytoplasmic) is located at residue Leu59.

The protein belongs to the G-protein coupled receptor 1 family.

Its subcellular location is the cell membrane. In terms of biological role, receptor for gonadotropin releasing hormone (GnRH) that mediates the action of GnRH to stimulate the secretion of the gonadotropic hormones luteinizing hormone (LH) and follicle-stimulating hormone (FSH). This receptor mediates its action by association with G-proteins that activate a phosphatidylinositol-calcium second messenger system. The sequence is that of Gonadotropin-releasing hormone receptor (GNRHR) from Macaca mulatta (Rhesus macaque).